The chain runs to 547 residues: Elongator complex protein 3 (547 aa).

In terms of domain architecture, Radical SAM core spans 82-372; sequence RTASGIAVVA…YRVQRDIPMP (291 aa). Positions 99, 109, and 112 each coordinate [4Fe-4S] cluster. S161 bears the Phosphoserine mark. K164 is a binding site for acetyl-CoA. Y202 bears the Phosphotyrosine; by ALK mark. The residue at position 229 (K229) is an N6-methyllysine. Position 251 is a phosphotyrosine (Y251). Residues 396-547 enclose the N-acetyltransferase domain; sequence IQCRDVRTRE…QGPYMVKMLK (152 aa). Acetyl-CoA is bound by residues 474-477, 497-499, and Y530; these read ELHV and FGM.

It belongs to the ELP3 family. As to quaternary structure, component of the elongator complex which consists of ELP1, ELP2, ELP3, ELP4, ELP5 and ELP6. ELP1, ELP2 and ELP3 form the elongator core complex. Interacts with alpha-tubulin. The cofactor is [4Fe-4S] cluster. Post-translationally, tyrosine-phosphorylated; phosphorylation on Tyr-202 does not affect elongator complex integrity or ELP3 protein stability. Also serine/threonine-phosphorylated. Expressed in the cerebellum and spinal motor neurons.

It localises to the cytoplasm. The protein localises to the nucleus. It catalyses the reaction uridine(34) in tRNA + acetyl-CoA + S-adenosyl-L-methionine + H2O = 5-(carboxymethyl)uridine(34) in tRNA + 5'-deoxyadenosine + L-methionine + CoA + 2 H(+). It functions in the pathway tRNA modification; 5-methoxycarbonylmethyl-2-thiouridine-tRNA biosynthesis. In terms of biological role, catalytic tRNA acetyltransferase subunit of the elongator complex which is required for multiple tRNA modifications, including mcm5U (5-methoxycarbonylmethyl uridine), mcm5s2U (5-methoxycarbonylmethyl-2-thiouridine), and ncm5U (5-carbamoylmethyl uridine). In the elongator complex, acts as a tRNA uridine(34) acetyltransferase by mediating formation of carboxymethyluridine in the wobble base at position 34 in tRNAs. May also act as a protein lysine acetyltransferase by mediating acetylation of target proteins; such activity is however unclear in vivo and recent evidences suggest that ELP3 primarily acts as a tRNA acetyltransferase. Involved in neurogenesis: regulates the migration and branching of projection neurons in the developing cerebral cortex, through a process depending on alpha-tubulin acetylation. Required for acetylation of GJA1 in the developing cerebral cortex. This Homo sapiens (Human) protein is Elongator complex protein 3.